A 95-amino-acid chain; its full sequence is Protein TusB (95 aa).

This sequence belongs to the DsrH/TusB family. As to quaternary structure, heterohexamer, formed by a dimer of trimers. The hexameric TusBCD complex contains 2 copies each of TusB, TusC and TusD. The TusBCD complex interacts with TusE.

It is found in the cytoplasm. Part of a sulfur-relay system required for 2-thiolation of 5-methylaminomethyl-2-thiouridine (mnm(5)s(2)U) at tRNA wobble positions. The chain is Protein TusB from Buchnera aphidicola subsp. Baizongia pistaciae (strain Bp).